Reading from the N-terminus, the 815-residue chain is ABC transporter G family member 7 (815 aa).

2 disordered regions span residues 81–141 (NNID…TPNF) and 177–249 (KQIK…TNGK). Residues 164 to 199 (ENISYKTENRNYKKQIKDEKKRKKKLEMERSNSSNS) are a coiled coil. The segment covering 194–210 (SNSSNSNSSYDVESSAS) has biased composition (low complexity). The span at 211–248 (GLQTPQQSRSSILPTNSLNISKIDQSMNPQQTRSTTNG) shows a compositional bias: polar residues. The ABC transporter domain occupies 242–485 (TRSTTNGKIE…SLPNQYQCPN (244 aa)). Position 274–281 (274–281 (GPSGSGKS)) interacts with ATP. Residues 562 to 810 (TQYITRLSGG…VSGYWAISKL (249 aa)) form the ABC transmembrane type-2 domain. 7 helical membrane passes run 568–588 (LSGG…LSPS), 598–618 (ILFF…TLFL), 647–667 (AFIQ…INHL), 675–695 (FITY…IIAI), 706–726 (FIYG…LVPV), 732–752 (SFGW…VMVA), and 788–808 (GIGI…WAIS).

The protein belongs to the ABC transporter superfamily. ABCG family.

The protein localises to the membrane. The sequence is that of ABC transporter G family member 7 (abcG7) from Dictyostelium discoideum (Social amoeba).